Consider the following 192-residue polypeptide: MEYRSLTLDDFLSRFQLLRPQINRETLNHRQAAVLIPIVRRPQPGLLLTQRSIHLRKHAGQVAFPGGAVDDTDASAIAAALREAEEEVAIPPSAVEVIGVLPPVDSVTGYQVTPVVGIIPPDLPYRASEDEVSAVFEMPLAQALHLGRYHPLDIYRRGDSHRVWLSWYEQYFVWGMTAGIIRELALQIGVKP.

The 132-residue stretch at 29 to 160 folds into the Nudix hydrolase domain; that stretch reads HRQAAVLIPI…PLDIYRRGDS (132 aa). Positions 67-89 match the Nudix box motif; it reads GAVDDTDASAIAAALREAEEEVA. 2 residues coordinate Mg(2+): E83 and E87.

It belongs to the Nudix hydrolase family. PCD1 subfamily. Mn(2+) serves as cofactor. Requires Mg(2+) as cofactor.

In terms of biological role, probably mediates the hydrolysis of some nucleoside diphosphate derivatives. This is an uncharacterized protein from Escherichia coli (strain K12).